A 647-amino-acid chain; its full sequence is Paraneoplastic antigen Ma6E (647 aa).

Disordered regions lie at residues 111-199 (QPQG…AGGA), 227-254 (GAAG…RAAG), 508-580 (AAAP…VPWG), and 608-647 (RGQE…SQGK). Gly residues-rich tracts occupy residues 122-149 (GEGG…GEAG), 158-199 (GEAG…AGGA), and 227-251 (GAAG…GEGR). Residues 517 to 570 (PAAAQASPAQGNASEAGPGAEDAAEAASATKEAARGAPAAGEGESAPAGPEGLG) show a composition bias toward low complexity. Residues 625–636 (EEPENEDEDGAG) are compositionally biased toward acidic residues.

This Homo sapiens (Human) protein is Paraneoplastic antigen Ma6E.